Reading from the N-terminus, the 459-residue chain is Cobyrinate a,c-diamide synthase (459 aa).

The 198-residue stretch at 249–446 (RIGMAFDEAF…VHTHFASRPG (198 aa)) folds into the GATase cobBQ-type domain. The Nucleophile role is filled by cysteine 332.

It belongs to the CobB/CbiA family. Requires Mg(2+) as cofactor.

It catalyses the reaction cob(II)yrinate + 2 L-glutamine + 2 ATP + 2 H2O = cob(II)yrinate a,c diamide + 2 L-glutamate + 2 ADP + 2 phosphate + 2 H(+). The protein operates within cofactor biosynthesis; adenosylcobalamin biosynthesis; cob(II)yrinate a,c-diamide from sirohydrochlorin (anaerobic route): step 10/10. Functionally, catalyzes the ATP-dependent amidation of the two carboxylate groups at positions a and c of cobyrinate, using either L-glutamine or ammonia as the nitrogen source. The chain is Cobyrinate a,c-diamide synthase from Syntrophotalea carbinolica (strain DSM 2380 / NBRC 103641 / GraBd1) (Pelobacter carbinolicus).